The primary structure comprises 544 residues: Phenylalanine--tRNA ligase beta subunit (544 aa).

Residues 268–343 form the B5 domain; sequence LIHKIQNVRE…MSIGYNNLEP (76 aa). Residues D321, D327, E330, and D331 each coordinate Mg(2+).

Belongs to the phenylalanyl-tRNA synthetase beta subunit family. Type 2 subfamily. In terms of assembly, tetramer of two alpha and two beta subunits. Requires Mg(2+) as cofactor.

It is found in the cytoplasm. It catalyses the reaction tRNA(Phe) + L-phenylalanine + ATP = L-phenylalanyl-tRNA(Phe) + AMP + diphosphate + H(+). In Saccharolobus solfataricus (strain ATCC 35092 / DSM 1617 / JCM 11322 / P2) (Sulfolobus solfataricus), this protein is Phenylalanine--tRNA ligase beta subunit.